We begin with the raw amino-acid sequence, 459 residues long: DNA primase large subunit (459 aa).

[4Fe-4S] cluster is bound by residues cysteine 291, cysteine 369, cysteine 386, and cysteine 428.

It belongs to the eukaryotic-type primase large subunit family. Heterodimer of a catalytic subunit spp1/pri1 and a regulatory subunit spp2/pri2, also known as the DNA primase complex. Component of the alpha DNA polymerase complex (also known as the alpha DNA polymerase-primase complex) consisting of four subunits: the catalytic subunit pol1, the accessory subunit spb70/pol12, and the primase complex subunits spp1/pri1 and spp2/pri2 respectively. Interacts with orc2; preferentially associates with the unphosphorylated orc2 in G1 pre-Start prior to orc2 being phosphorylated by cdc2, the interaction is mediated by spb70 and might enable the association of the whole alpha DNA polymerase complex to orc2/spb70 complex on chromatin. [4Fe-4S] cluster serves as cofactor.

The protein localises to the nucleus. It localises to the chromosome. Functionally, regulatory subunit of the DNA primase complex and component of the DNA polymerase alpha complex (also known as the alpha DNA polymerase-primase complex - primosome/replisome) which play an essential role in the initiation of DNA synthesis. During the S phase of the cell cycle, the DNA polymerase alpha complex (composed of a catalytic subunit pol1, an accessory subunit spb70/pol12 and two primase subunits, the catalytic subunit spp1/pri1 and the regulatory subunit spp2/pri2) is recruited to DNA at the replicative forks. The primase subunit of the polymerase alpha complex initiates DNA synthesis by oligomerising short RNA primers on both leading and lagging strands. This Schizosaccharomyces pombe (strain 972 / ATCC 24843) (Fission yeast) protein is DNA primase large subunit.